The primary structure comprises 122 residues: Basic phospholipase A2 PL-X (122 aa).

Disulfide bonds link Cys26–Cys115, Cys28–Cys44, Cys43–Cys95, Cys49–Cys122, Cys50–Cys88, Cys57–Cys81, and Cys75–Cys86. Residues Tyr27, Gly29, and Gly31 each contribute to the Ca(2+) site. His47 is a catalytic residue. Residue Asp48 participates in Ca(2+) binding. Asp89 is a catalytic residue.

It belongs to the phospholipase A2 family. Group II subfamily. D49 sub-subfamily. It depends on Ca(2+) as a cofactor. As to expression, expressed by the venom gland.

It localises to the secreted. The enzyme catalyses a 1,2-diacyl-sn-glycero-3-phosphocholine + H2O = a 1-acyl-sn-glycero-3-phosphocholine + a fatty acid + H(+). Functionally, PLA2 catalyzes the calcium-dependent hydrolysis of the 2-acyl groups in 3-sn-phosphoglycerides. In Protobothrops flavoviridis (Habu), this protein is Basic phospholipase A2 PL-X.